The chain runs to 237 residues: Small ribosomal subunit protein uS2m (237 aa).

This sequence belongs to the universal ribosomal protein uS2 family.

Its subcellular location is the mitochondrion. In Marchantia polymorpha (Common liverwort), this protein is Small ribosomal subunit protein uS2m (RPS2).